The primary structure comprises 197 residues: Probable GTP-binding protein EngB (197 aa).

One can recognise an EngB-type G domain in the interval 25 to 197 (SAPEIAFAGR…VRDEFFKFTR (173 aa)). GTP contacts are provided by residues 33-40 (GRSNVGKS), 60-64 (GCTRQ), 79-82 (DLPG), 146-149 (TKID), and 177-179 (ISV). Residues Ser40 and Thr62 each contribute to the Mg(2+) site.

This sequence belongs to the TRAFAC class TrmE-Era-EngA-EngB-Septin-like GTPase superfamily. EngB GTPase family. It depends on Mg(2+) as a cofactor.

Functionally, necessary for normal cell division and for the maintenance of normal septation. This Wolbachia sp. subsp. Brugia malayi (strain TRS) protein is Probable GTP-binding protein EngB.